Here is a 1017-residue protein sequence, read N- to C-terminus: MPVMKGLLAPQNTFLDTIATRFDGTHSNFLLANAQGPRGFPIVYCSDGFCELTGYGRTEVMQKTCSCRFLYGPETSEPALQRLQKALEGHQEHRAEICFYRKDGSAFWCLLDMMPIKNELGEVVLFLFSFKDISQSGGPGLGSPGIHGDNNNHENSLGRRGASSRLRSTRRQNRTVLHRLTGHFGRRDQGSVKANSNVFEPKPSVPEYKVASVGGSRCLLLHYSIPKAVWDGLILLATFYVAVTVPYNVCFAGDDDTPITSRHTLVSDIAVEMLFILDIILNFRTTYVSQSGQVVSAPRSIGLHYLATWFFVDLIAALPFDLLYVFNITVTSLVHLLKTVRLLRLLRLLQKLERYSQCSAVVLTLLMSVFALLAHWMACVWYVIGRREMEANDPLLWDIGWLHELGKRLEEPYVNGSAGGPSRRSAYIAALYFTLSSLTSVGFGNVCANTDAEKIFSICTMLIGALMHAVVFGNVTAIIQRMYSRRSLYHSRMKDLKDFIRVHRLPRPLKQRMLEYFQTTWAVNSGIDANELLRDFPDELRADIAMHLNREILQLPLFGAASRGCLRALSLHIKTSFCAPGEFLLRRGDALQAHYYVCSGSLEVLRDNTVLAILGKGDLIGADIPELGQEPGAGAGCVLKTSADVKALTYCGLQQLSSRGLAEVLRLYPEYVAAFRAGLPRDLTFNLRQGSENNGLGRFSRSPRLSQARSDTLGSSSDKTLPSITETEGGMEPGAGSKPRRPLLLPNLSPARPRGSLVSLLGEELPPFSALVSSPSLSPTPSPALAGRGSSPSLHGPPRGSAAWKPPQLLTPPLGTFGPPDLSPRIVDGIEDSSNTAEAPTFRFSKRPEPTRTRSQAPLSGPRLSRELATEAAEEVKEKVCRLNQEISRLNQEVSQLSRELRQVMGLLQARLGPPSHPPDSTWLPDLPCPHQRPPCISPHMSGPPPGLQNTTLAVVHCPASVGTVEIGATPSELRSSMVPPFPSEPDPLGPSPVPEASPLTPSLLKHSFQSGSDTFH.

At Met1–Gly232 the chain is on the cytoplasmic side. The 77-residue stretch at Phe14–His90 folds into the PAS domain. In terms of domain architecture, PAC spans His93–Gly145. Residues Pro139–Arg170 are disordered. Residues Leu233 to Gly253 form a helical membrane-spanning segment. Topologically, residues Asp254–Arg262 are extracellular. The helical transmembrane segment at His263–Phe283 threads the bilayer. Residues Arg284–Tyr305 are Cytoplasmic-facing. Residues Leu306–Phe326 form a helical membrane-spanning segment. Residues Asn327–Val334 lie on the Extracellular side of the membrane. Residues His335 to Tyr355 traverse the membrane as a helical; Voltage-sensor segment. The Cytoplasmic portion of the chain corresponds to Ser356–Thr364. Residues Leu365–Gly385 form a helical membrane-spanning segment. Over Arg386–Tyr427 the chain is Extracellular. Asn415 is a glycosylation site (N-linked (GlcNAc...) asparagine). The segment at residues Ile428 to Ala448 is an intramembrane region (pore-forming). Positions Ser440–Asn445 match the Selectivity filter motif. The Extracellular segment spans residues Asn449–Lys454. Residues Ile455–Val475 traverse the membrane as a helical segment. Residues Thr476–His1017 lie on the Cytoplasmic side of the membrane. Residues Leu557–Gly621 form a cNMP-binding domain region. Disordered stretches follow at residues Gly690–Ser749 and Leu771–Thr870. Residues Pro703–Glu726 are compositionally biased toward polar residues. Low complexity-rich tracts occupy residues Leu771–Ala786 and Pro806–Pro820. Residues Ala873–Leu907 adopt a coiled-coil conformation. The segment at Ser972–His1017 is disordered. Positions Pro980–Glu996 are enriched in pro residues. The segment covering Ser1008 to His1017 has biased composition (polar residues).

It belongs to the potassium channel family. H (Eag) (TC 1.A.1.20) subfamily. Kv12.3/KCNH4 sub-subfamily. As to quaternary structure, the potassium channel is probably composed of a homo- or heterotetrameric complex of pore-forming alpha subunits that can associate with modulating beta subunits. As to expression, highly expressed in adult testis, and in adult and embryonic brain. In adult brain found in piriform cortex, olfactory tubercle, cerebral cortex, hippocampus pyramidial cells and dentate gyrus and basal ganglia of caudate/putamen and accumbens nucleus. Detected at intermediate levels in lung, spinal cord, and pituitary.

The protein resides in the membrane. The catalysed reaction is K(+)(in) = K(+)(out). In terms of biological role, pore-forming (alpha) subunit of a voltage-gated delayed rectifier. Activates at more negative voltages, exhibits fast prepulse-independent activation kinetics and deactivates much more slowly, but shows no inactivation. This chain is Voltage-gated delayed rectifier potassium channel KCNH4, found in Rattus norvegicus (Rat).